We begin with the raw amino-acid sequence, 322 residues long: Acetylglutamate kinase (322 aa).

Substrate-binding positions include 85 to 86, arginine 107, and asparagine 211; that span reads GG.

It belongs to the acetylglutamate kinase family. ArgB subfamily.

Its subcellular location is the cytoplasm. The enzyme catalyses N-acetyl-L-glutamate + ATP = N-acetyl-L-glutamyl 5-phosphate + ADP. The protein operates within amino-acid biosynthesis; L-arginine biosynthesis; N(2)-acetyl-L-ornithine from L-glutamate: step 2/4. Functionally, catalyzes the ATP-dependent phosphorylation of N-acetyl-L-glutamate. The protein is Acetylglutamate kinase of Methanosarcina barkeri (strain Fusaro / DSM 804).